Consider the following 152-residue polypeptide: Ribosome maturation factor RimP (152 aa).

The protein belongs to the RimP family.

The protein resides in the cytoplasm. Its function is as follows. Required for maturation of 30S ribosomal subunits. In Burkholderia lata (strain ATCC 17760 / DSM 23089 / LMG 22485 / NCIMB 9086 / R18194 / 383), this protein is Ribosome maturation factor RimP.